The primary structure comprises 264 residues: S-adenosylmethionine decarboxylase proenzyme (264 aa).

Ser112 serves as the catalytic Schiff-base intermediate with substrate; via pyruvic acid. Ser112 carries the post-translational modification Pyruvic acid (Ser); by autocatalysis. The Proton acceptor; for processing activity role is filled by His117. Catalysis depends on Cys140, which acts as the Proton donor; for catalytic activity.

The protein belongs to the prokaryotic AdoMetDC family. Type 2 subfamily. Heterooctamer of four alpha and four beta chains arranged as a tetramer of alpha/beta heterodimers. Requires pyruvate as cofactor. Post-translationally, is synthesized initially as an inactive proenzyme. Formation of the active enzyme involves a self-maturation process in which the active site pyruvoyl group is generated from an internal serine residue via an autocatalytic post-translational modification. Two non-identical subunits are generated from the proenzyme in this reaction, and the pyruvate is formed at the N-terminus of the alpha chain, which is derived from the carboxyl end of the proenzyme. The post-translation cleavage follows an unusual pathway, termed non-hydrolytic serinolysis, in which the side chain hydroxyl group of the serine supplies its oxygen atom to form the C-terminus of the beta chain, while the remainder of the serine residue undergoes an oxidative deamination to produce ammonia and the pyruvoyl group blocking the N-terminus of the alpha chain.

It carries out the reaction S-adenosyl-L-methionine + H(+) = S-adenosyl 3-(methylsulfanyl)propylamine + CO2. It participates in amine and polyamine biosynthesis; S-adenosylmethioninamine biosynthesis; S-adenosylmethioninamine from S-adenosyl-L-methionine: step 1/1. Its function is as follows. Catalyzes the decarboxylation of S-adenosylmethionine to S-adenosylmethioninamine (dcAdoMet), the propylamine donor required for the synthesis of the polyamines spermine and spermidine from the diamine putrescine. The chain is S-adenosylmethionine decarboxylase proenzyme from Hamiltonella defensa subsp. Acyrthosiphon pisum (strain 5AT).